The chain runs to 905 residues: FIGNL1-interacting regulator of recombination and mitosis (905 aa).

Phosphoserine is present on residues Ser-101 and Ser-796. Residue Lys-845 is modified to N6-acetyllysine.

As to quaternary structure, interacts (via its N-terminal region) with PLK1; controls PLK1 kinase activity. Interacts (via the KVVXF motif) with PPP1CC; controls PLK1 kinase activity. Interacts with FIGNL1; may regulate homologous recombination. In terms of processing, phosphorylation at Ser-101 by PLK1 strengthens FIRRM-PLK1 interaction. Phosphorylation at Ser-796 by PLK1 negatively regulates its interaction with PPP1CC.

It localises to the chromosome. Its subcellular location is the centromere. The protein resides in the kinetochore. The protein localises to the nucleus. It is found in the midbody. It localises to the cytoplasm. Its subcellular location is the cytoskeleton. The protein resides in the spindle. Regulates PLK1 kinase activity at kinetochores and promotes faithful chromosome segregation in prometaphase by bridging kinase and phosphatase activities. Phosphorylation of FIRRM by PLK1 negatively regulates its interaction with the phosphatase, PPP1CC, thus creating a negative feedback loop for maintaining proper PLK1 kinase activity during mitosis. In complex with FIGL1 may regulate homologous recombination. The chain is FIGNL1-interacting regulator of recombination and mitosis from Rattus norvegicus (Rat).